A 425-amino-acid chain; its full sequence is Serine--tRNA ligase (425 aa).

233–235 (TAE) provides a ligand contact to L-serine. Position 264-266 (264-266 (RAE)) interacts with ATP. Glu287 is a binding site for L-serine. 351–354 (EISS) provides a ligand contact to ATP. Ser387 provides a ligand contact to L-serine.

The protein belongs to the class-II aminoacyl-tRNA synthetase family. Type-1 seryl-tRNA synthetase subfamily. As to quaternary structure, homodimer. The tRNA molecule binds across the dimer.

It is found in the cytoplasm. It carries out the reaction tRNA(Ser) + L-serine + ATP = L-seryl-tRNA(Ser) + AMP + diphosphate + H(+). It catalyses the reaction tRNA(Sec) + L-serine + ATP = L-seryl-tRNA(Sec) + AMP + diphosphate + H(+). It participates in aminoacyl-tRNA biosynthesis; selenocysteinyl-tRNA(Sec) biosynthesis; L-seryl-tRNA(Sec) from L-serine and tRNA(Sec): step 1/1. In terms of biological role, catalyzes the attachment of serine to tRNA(Ser). Is also able to aminoacylate tRNA(Sec) with serine, to form the misacylated tRNA L-seryl-tRNA(Sec), which will be further converted into selenocysteinyl-tRNA(Sec). This chain is Serine--tRNA ligase, found in Clostridium botulinum (strain Alaska E43 / Type E3).